The sequence spans 247 residues: uncharacterized protein (247 aa).

This is an uncharacterized protein from Saccharomyces cerevisiae (strain ATCC 204508 / S288c) (Baker's yeast).